Consider the following 477-residue polypeptide: Putative multidrug resistance protein MdtD (477 aa).

Helical transmembrane passes span 13–33 (LWIV…VNTA), 50–70 (SVIV…GWLA), 73–93 (VGVQ…SILC), 107–127 (VVQG…VMKI), 139–159 (FVTL…GFLV), 166–186 (WIFL…LLLM), 196–216 (FDIS…LALD), 220–240 (GMGL…AALA), 268–288 (LTAS…TPLF), 291–311 (VGMG…IIGS), 326–348 (GYRN…FPLV), 352–374 (GWIW…RFSA), 394–414 (LLSM…GILI), and 432–452 (AFIY…LAFA).

It belongs to the major facilitator superfamily. TCR/Tet family.

It localises to the cell inner membrane. In Serratia proteamaculans (strain 568), this protein is Putative multidrug resistance protein MdtD.